Consider the following 421-residue polypeptide: Early growth response protein 2 (421 aa).

Positions 127 to 145 (CSSTSSSNASSGSPNLSCS) are enriched in low complexity. Disordered stretches follow at residues 127 to 152 (CSST…PQSD), 179 to 200 (SPTA…ASDG), and 223 to 288 (SDRK…ERPY). Residues 236–247 (PLSTIRNFTLGG) are compositionally biased toward polar residues. 3 C2H2-type zinc fingers span residues 288-312 (YPCP…IRIH), 318-340 (FQCR…IRTH), and 346-368 (FACD…TKIH).

Belongs to the EGR C2H2-type zinc-finger protein family.

The protein localises to the nucleus. In terms of biological role, sequence-specific DNA-binding transcription factor. The polypeptide is Early growth response protein 2 (egr2) (Xenopus laevis (African clawed frog)).